A 224-amino-acid polypeptide reads, in one-letter code: Triosephosphate isomerase (224 aa).

9–11 is a substrate binding site; it reads NFK. Catalysis depends on H93, which acts as the Electrophile. E141 acts as the Proton acceptor in catalysis. Substrate-binding positions include I146, G181, and 202-203; that span reads AS.

It belongs to the triosephosphate isomerase family. Homotetramer; dimer of dimers.

Its subcellular location is the cytoplasm. It carries out the reaction D-glyceraldehyde 3-phosphate = dihydroxyacetone phosphate. It functions in the pathway carbohydrate biosynthesis; gluconeogenesis. It participates in carbohydrate degradation; glycolysis; D-glyceraldehyde 3-phosphate from glycerone phosphate: step 1/1. Functionally, involved in the gluconeogenesis. Catalyzes stereospecifically the conversion of dihydroxyacetone phosphate (DHAP) to D-glyceraldehyde-3-phosphate (G3P). The polypeptide is Triosephosphate isomerase (Pyrobaculum arsenaticum (strain DSM 13514 / JCM 11321 / PZ6)).